The chain runs to 503 residues: Alpha-1,3/1,6-mannosyltransferase ALG2 (503 aa).

N-linked (GlcNAc...) asparagine glycans are attached at residues Asn-59, Asn-173, Asn-262, and Asn-403. 2 helical membrane passes run 444–466 (LWSTLAPGLLMFTVQYATLLITG) and 473–495 (LLLAAISYFVLRSVKATVYWIIV). Residue Asn-500 is glycosylated (N-linked (GlcNAc...) asparagine).

Belongs to the glycosyltransferase group 1 family.

Its subcellular location is the endoplasmic reticulum membrane. It carries out the reaction a beta-D-Man-(1-&gt;4)-beta-D-GlcNAc-(1-&gt;4)-alpha-D-GlcNAc-diphospho-di-trans,poly-cis-dolichol + GDP-alpha-D-mannose = an alpha-D-Man-(1-&gt;3)-beta-D-Man-(1-&gt;4)-beta-D-GlcNAc-(1-&gt;4)-alpha-D-GlcNAc-diphospho-di-trans,poly-cis-dolichol + GDP + H(+). The catalysed reaction is an alpha-D-Man-(1-&gt;3)-beta-D-Man-(1-&gt;4)-beta-D-GlcNAc-(1-&gt;4)-alpha-D-GlcNAc-diphospho-di-trans,poly-cis-dolichol + GDP-alpha-D-mannose = an alpha-D-Man-(1-&gt;3)-[alpha-D-Man-(1-&gt;6)]-beta-D-Man-(1-&gt;4)-beta-D-GlcNAc-(1-&gt;4)-alpha-D-GlcNAc-diphospho-di-trans,poly-cis-dolichol + GDP + H(+). It participates in protein modification; protein glycosylation. In terms of biological role, mannosylates Man(2)GlcNAc(2)-dolichol diphosphate and Man(1)GlcNAc(2)-dolichol diphosphate to form Man(3)GlcNAc(2)-dolichol diphosphate. In Kluyveromyces lactis (strain ATCC 8585 / CBS 2359 / DSM 70799 / NBRC 1267 / NRRL Y-1140 / WM37) (Yeast), this protein is Alpha-1,3/1,6-mannosyltransferase ALG2 (ALG2).